A 421-amino-acid polypeptide reads, in one-letter code: Gamma-glutamyl phosphate reductase (421 aa).

The protein belongs to the gamma-glutamyl phosphate reductase family.

Its subcellular location is the cytoplasm. The enzyme catalyses L-glutamate 5-semialdehyde + phosphate + NADP(+) = L-glutamyl 5-phosphate + NADPH + H(+). It functions in the pathway amino-acid biosynthesis; L-proline biosynthesis; L-glutamate 5-semialdehyde from L-glutamate: step 2/2. Functionally, catalyzes the NADPH-dependent reduction of L-glutamate 5-phosphate into L-glutamate 5-semialdehyde and phosphate. The product spontaneously undergoes cyclization to form 1-pyrroline-5-carboxylate. The protein is Gamma-glutamyl phosphate reductase of Pseudomonas syringae pv. tomato (strain ATCC BAA-871 / DC3000).